A 220-amino-acid chain; its full sequence is MSGLLSRETFAKITNPLASALLRAGFTPDTVTIFGTAASVVAALTLFPTGHLFWGGMAVWLFAMFDMLDGAMARARGGGTRFGAVLDATCDRVADGAVFAGLVWWAAFGWGSTSLVVATLICMITSQVISYVKARAEASGLRADGGLIERPERLIIVLAGAIFSGGFGVQWPLHTAMWVLAVASLVTVAQRMHAVRTSPGALDLLPNSDAGQDTAETNQP.

2 helical membrane-spanning segments follow: residues 21-46 (LLRA…ALTL) and 52-72 (LFWG…DGAM). 29-32 (DTVT) is an a CDP-1,2-diacyl-sn-glycerol binding site. Residues Asp66 and Asp69 each coordinate Mg(2+). Residues Gly70, Arg74, and Thr80 each contribute to the a CDP-1,2-diacyl-sn-glycerol site. Asp87 and Asp91 together coordinate Mg(2+). The Proton acceptor role is filled by Asp91. Helical transmembrane passes span 93–110 (VADG…AFGW), 116–134 (VVAT…YVKA), 154–171 (LIIV…GVQW), and 177–194 (MWVL…RMHA).

It belongs to the CDP-alcohol phosphatidyltransferase class-I family. Homodimer. Mg(2+) serves as cofactor.

It is found in the cell membrane. It carries out the reaction a CDP-1,2-diacyl-sn-glycerol + 1D-myo-inositol 3-phosphate = a 1,2-diacyl-sn-glycero-3-phospho-(1D-myo-inositol-3-phosphate) + CMP + H(+). The enzyme catalyses 1,2-di-(9Z-octadecenoyl)-sn-glycero-3-cytidine-5'-diphosphate + 1D-myo-inositol 3-phosphate = 1,2-di-(9Z-octadecenoyl)-sn-glycero-3-phospho-(1D-myo-inositol-3-phosphate) + CMP + H(+). It participates in phospholipid metabolism; phosphatidylinositol phosphate biosynthesis. Its function is as follows. Catalyzes the conjugation of the 1'-hydroxyl group of D-myo-inositol-3-phosphate (also named L-myo-inositol-1-phosphate) with a lipid tail of cytidine diphosphate diacylglycerol (CDP-DAG), forming phosphatidylinositol phosphate (PIP) and CMP. PIP is a precursor of phosphatidylinositol (PI) which is an essential lipid for mycobacteria required for formation of their cell wall. This is Phosphatidylinositol phosphate synthase from Mycobacteroides abscessus (strain ATCC 19977 / DSM 44196 / CCUG 20993 / CIP 104536 / JCM 13569 / NCTC 13031 / TMC 1543 / L948) (Mycobacterium abscessus).